Consider the following 35-residue polypeptide: Potassium channel toxin alpha-KTx 6.12 (35 aa).

Gln-1 is subject to Pyrrolidone carboxylic acid. 4 disulfides stabilise this stretch: Cys-4–Cys-24, Cys-10–Cys-29, Cys-14–Cys-31, and Cys-19–Cys-34. Lys-35 bears the Lysine amide mark.

It belongs to the short scorpion toxin superfamily. Potassium channel inhibitor family. Alpha-KTx 06 subfamily. In terms of assembly, monomer. Expressed by the venom gland.

Its subcellular location is the secreted. High affinity blocker of Kv1.3/KCNA3 channels of human T cells. Blocks Kv1.2/KCNA2 with an order of magnitude smaller than for Kv1.3/KCNA3. The chain is Potassium channel toxin alpha-KTx 6.12 from Anuroctonus phaiodactylus (Mafia scorpion).